The primary structure comprises 322 residues: ATP-dependent 6-phosphofructokinase (322 aa).

Position 11 (Gly11) interacts with ATP. 21–25 (RAVTR) contacts ADP. Residues 72-73 (RC) and 102-105 (GDGS) each bind ATP. Mg(2+) is bound at residue Asp103. 127-129 (TID) provides a ligand contact to substrate. The active-site Proton acceptor is the Asp129. Arg156 contacts ADP. Substrate is bound by residues Arg164 and 171-173 (MGR). Residues 187-189 (GAE), Arg213, and 215-217 (KKH) each bind ADP. Substrate-binding positions include Glu224, Arg245, and 251–254 (HIQR).

This sequence belongs to the phosphofructokinase type A (PFKA) family. ATP-dependent PFK group I subfamily. Prokaryotic clade 'B1' sub-subfamily. As to quaternary structure, homotetramer. Mg(2+) serves as cofactor.

The protein resides in the cytoplasm. It catalyses the reaction beta-D-fructose 6-phosphate + ATP = beta-D-fructose 1,6-bisphosphate + ADP + H(+). The protein operates within carbohydrate degradation; glycolysis; D-glyceraldehyde 3-phosphate and glycerone phosphate from D-glucose: step 3/4. With respect to regulation, allosterically activated by ADP and other diphosphonucleosides, and allosterically inhibited by phosphoenolpyruvate. Functionally, catalyzes the phosphorylation of D-fructose 6-phosphate to fructose 1,6-bisphosphate by ATP, the first committing step of glycolysis. The protein is ATP-dependent 6-phosphofructokinase of Staphylococcus epidermidis (strain ATCC 35984 / DSM 28319 / BCRC 17069 / CCUG 31568 / BM 3577 / RP62A).